Reading from the N-terminus, the 212-residue chain is Regulatory protein RecX (212 aa).

This sequence belongs to the RecX family.

Its subcellular location is the cytoplasm. Functionally, modulates RecA activity. The polypeptide is Regulatory protein RecX (Clostridium botulinum (strain Alaska E43 / Type E3)).